A 1380-amino-acid polypeptide reads, in one-letter code: DNA-directed RNA polymerase subunit beta (1380 aa).

The protein belongs to the RNA polymerase beta chain family. In terms of assembly, the RNAP catalytic core consists of 2 alpha, 1 beta, 1 beta' and 1 omega subunit. When a sigma factor is associated with the core the holoenzyme is formed, which can initiate transcription.

It catalyses the reaction RNA(n) + a ribonucleoside 5'-triphosphate = RNA(n+1) + diphosphate. Functionally, DNA-dependent RNA polymerase catalyzes the transcription of DNA into RNA using the four ribonucleoside triphosphates as substrates. This chain is DNA-directed RNA polymerase subunit beta, found in Rhizobium rhizogenes (strain K84 / ATCC BAA-868) (Agrobacterium radiobacter).